We begin with the raw amino-acid sequence, 472 residues long: tRNA modification GTPase MnmE (472 aa).

Arg28, Glu91, and Lys130 together coordinate (6S)-5-formyl-5,6,7,8-tetrahydrofolate. Residues 225 to 391 (GAKVVLAGKT…LSEKAYSVLA (167 aa)) form the TrmE-type G domain. Position 235 (Asn235) interacts with K(+). GTP-binding positions include 235–240 (NAGKSS), 254–260 (SDIHGTT), and 279–282 (DTAG). Ser239 contributes to the Mg(2+) binding site. Ser254, Ile256, and Thr259 together coordinate K(+). Thr260 is a Mg(2+) binding site. Lys472 is a (6S)-5-formyl-5,6,7,8-tetrahydrofolate binding site.

Belongs to the TRAFAC class TrmE-Era-EngA-EngB-Septin-like GTPase superfamily. TrmE GTPase family. In terms of assembly, homodimer. Heterotetramer of two MnmE and two MnmG subunits. It depends on K(+) as a cofactor.

It is found in the cytoplasm. Functionally, exhibits a very high intrinsic GTPase hydrolysis rate. Involved in the addition of a carboxymethylaminomethyl (cmnm) group at the wobble position (U34) of certain tRNAs, forming tRNA-cmnm(5)s(2)U34. The chain is tRNA modification GTPase MnmE from Treponema denticola (strain ATCC 35405 / DSM 14222 / CIP 103919 / JCM 8153 / KCTC 15104).